A 353-amino-acid polypeptide reads, in one-letter code: ATP-dependent kinase YFH7 (353 aa).

31 to 39 (GSPGSGKST) is an ATP binding site.

The protein belongs to the YFH7 family.

In terms of biological role, ATP-dependent kinase that could be involved in endoplasmic reticulum membrane assembly. In Saccharomyces cerevisiae (strain JAY291) (Baker's yeast), this protein is ATP-dependent kinase YFH7 (YFH7).